A 415-amino-acid chain; its full sequence is Histidine--tRNA ligase (415 aa).

Belongs to the class-II aminoacyl-tRNA synthetase family. As to quaternary structure, homodimer.

It localises to the cytoplasm. It catalyses the reaction tRNA(His) + L-histidine + ATP = L-histidyl-tRNA(His) + AMP + diphosphate + H(+). This is Histidine--tRNA ligase from Clostridium botulinum (strain ATCC 19397 / Type A).